Reading from the N-terminus, the 715-residue chain is Interferon-induced GTP-binding protein Mx2 (715 aa).

One can recognise a Dynamin-type G domain in the interval 115-387 (DLALPAIAVI…LIMHIQKSLP (273 aa)). A G1 motif region spans residues 125-132 (GDQSSGKS). Residue 125–132 (GDQSSGKS) coordinates GTP. Positions 150–152 (VTR) are G2 motif. The segment at 225–228 (DLPG) is G3 motif. GTP-binding positions include 225 to 229 (DLPGI) and 294 to 297 (TKPD). Residues 294-297 (TKPD) are G4 motif. Residues 326 to 329 (KCRG) are G5 motif. The GED domain occupies 623–714 (FTEIGIHLNA…ALCQFSSKEI (92 aa)).

The protein belongs to the TRAFAC class dynamin-like GTPase superfamily. Dynamin/Fzo/YdjA family.

The protein resides in the cytoplasm. Its subcellular location is the nucleus. The protein localises to the nuclear pore complex. Interferon-induced dynamin-like GTPase with potent antiviral activity against human immunodeficiency virus type 1 (HIV-1). Acts by targeting the viral capsid and affects the nuclear uptake and/or stability of the HIV-1 replication complex and the subsequent chromosomal integration of the proviral DNA. Exhibits antiviral activity also against simian immunodeficiency virus (SIV-mnd). May play a role in regulating nucleocytoplasmic transport and cell-cycle progression. This is Interferon-induced GTP-binding protein Mx2 (MX2) from Homo sapiens (Human).